We begin with the raw amino-acid sequence, 136 residues long: Large ribosomal subunit protein uL16c (136 aa).

It belongs to the universal ribosomal protein uL16 family. As to quaternary structure, part of the 50S ribosomal subunit.

The protein resides in the plastid. Its subcellular location is the chloroplast. The protein is Large ribosomal subunit protein uL16c of Saccharum hybrid (Sugarcane).